The chain runs to 213 residues: NADH-quinone oxidoreductase subunit C (213 aa).

Belongs to the complex I 30 kDa subunit family. NDH-1 is composed of 15 different subunits. Subunits NuoB, C, D, E, F, and G constitute the peripheral sector of the complex.

The protein resides in the cell membrane. The catalysed reaction is a quinone + NADH + 5 H(+)(in) = a quinol + NAD(+) + 4 H(+)(out). Functionally, NDH-1 shuttles electrons from NADH, via FMN and iron-sulfur (Fe-S) centers, to quinones in the respiratory chain. The immediate electron acceptor for the enzyme in this species is believed to be a menaquinone. Couples the redox reaction to proton translocation (for every two electrons transferred, four hydrogen ions are translocated across the cytoplasmic membrane), and thus conserves the redox energy in a proton gradient. The polypeptide is NADH-quinone oxidoreductase subunit C (Deinococcus geothermalis (strain DSM 11300 / CIP 105573 / AG-3a)).